The sequence spans 190 residues: MSRRYTPLAWVLLALLGLGAAQDCGSIVSRGKWGALASKCSQRLRQPVRYVVVSHTAGSVCNTPASCQRQAQNVQHYHVRERGWCDVGYNFLIGEDGLVYEGRGWNTLGAHSGPTWNPIAIGISFMGNYMHRVPPASALRAAQSLLACGAARGYLTPNYEVKGHRDVQQTLSPGDELYKIIQQWPHYRRV.

Residues 1-21 (MSRRYTPLAWVLLALLGLGAA) form the signal peptide. Q22 carries the post-translational modification Pyrrolidone carboxylic acid. Cystine bridges form between C24–C148, C40–C85, and C61–C67. Residues 46–174 (QPVRYVVVSH…RDVQQTLSPG (129 aa)) form the N-acetylmuramoyl-L-alanine amidase domain.

It belongs to the N-acetylmuramoyl-L-alanine amidase 2 family. Homodimer; disulfide-linked.

It is found in the secreted. It localises to the cytoplasmic granule. Functionally, innate immunity protein that plays several important functions in antimicrobial and antitumor defense systems. Acts as a pattern receptor that binds to murein peptidoglycans (PGN) of Gram-positive bacteria and thus provides bactericidal activity. Forms an equimolar complex with heat shock protein HSPA1A and induces programmed cell death through apoptosis and necroptosis in tumor cell lines by activating the TNFR1 receptor on the target cell membrane. In addition, acts in complex with the Ca(2+)-binding protein S100A4 as a chemoattractant able to induce lymphocyte movement. Mechanistically, this complex acts as a ligand of the chemotactic receptors CCR5 and CXCR3 which are present on the cells of the immune system. Promotes also the activation of lymphocytes that become able to kill virus-infected cells as well as tumor cells by modulating the spectrum of their target-cell specificity. Induction of cytotoxicity on monocyte surface requires interaction with TREM1 receptor. The chain is Peptidoglycan recognition protein 1 (PGLYRP1) from Bos indicus (Zebu).